Here is a 422-residue protein sequence, read N- to C-terminus: Signal recognition particle receptor FtsY (422 aa).

The interval 39 to 86 (PERGVVDRSGGYTASSGITFSQTPTTQPAERIDTSGLPAVGDDATVPR) is disordered. Positions 50–66 (YTASSGITFSQTPTTQP) are enriched in polar residues. GTP-binding positions include 230-237 (GVNGTGKT), 312-316 (DTAGR), and 374-377 (TKLD).

The protein belongs to the GTP-binding SRP family. FtsY subfamily. Part of the signal recognition particle protein translocation system, which is composed of SRP and FtsY.

It localises to the cell membrane. The protein resides in the cytoplasm. The catalysed reaction is GTP + H2O = GDP + phosphate + H(+). Its function is as follows. Involved in targeting and insertion of nascent membrane proteins into the cytoplasmic membrane. Acts as a receptor for the complex formed by the signal recognition particle (SRP) and the ribosome-nascent chain (RNC). The chain is Signal recognition particle receptor FtsY from Mycobacterium bovis (strain ATCC BAA-935 / AF2122/97).